The chain runs to 521 residues: Bifunctional purine biosynthesis protein PurH (521 aa).

Residues 1–145 enclose the MGS-like domain; sequence MIKQALISVS…KNHRDVTVVV (145 aa).

The protein belongs to the PurH family.

The catalysed reaction is (6R)-10-formyltetrahydrofolate + 5-amino-1-(5-phospho-beta-D-ribosyl)imidazole-4-carboxamide = 5-formamido-1-(5-phospho-D-ribosyl)imidazole-4-carboxamide + (6S)-5,6,7,8-tetrahydrofolate. The enzyme catalyses IMP + H2O = 5-formamido-1-(5-phospho-D-ribosyl)imidazole-4-carboxamide. It functions in the pathway purine metabolism; IMP biosynthesis via de novo pathway; 5-formamido-1-(5-phospho-D-ribosyl)imidazole-4-carboxamide from 5-amino-1-(5-phospho-D-ribosyl)imidazole-4-carboxamide (10-formyl THF route): step 1/1. The protein operates within purine metabolism; IMP biosynthesis via de novo pathway; IMP from 5-formamido-1-(5-phospho-D-ribosyl)imidazole-4-carboxamide: step 1/1. The sequence is that of Bifunctional purine biosynthesis protein PurH from Paraburkholderia phymatum (strain DSM 17167 / CIP 108236 / LMG 21445 / STM815) (Burkholderia phymatum).